Consider the following 532-residue polypeptide: Apolipoprotein N-acyltransferase (532 aa).

6 helical membrane passes run 37 to 57 (IFVAGFVSFPVLVWLIDGAIA), 75 to 95 (WWFGFGYFVSGLWWIGTALLV), 106 to 126 (LAVLGLPAFLALFYAFAAMIA), 128 to 148 (LLWSDGLGRILALAFGFALAE), 179 to 199 (VIGLVGMSALAVFVFAAPALL), and 207 to 227 (TGIGLAIFLALAHVGFGAWTL). In terms of domain architecture, CN hydrolase spans 245 to 494 (VQPSIAQAMK…VGVVDSYLPS (250 aa)). Glu289 serves as the catalytic Proton acceptor. Lys353 is an active-site residue. Cys406 acts as the Nucleophile in catalysis. Residues 505–525 (GWIQTVLILLTLLAASVGLIL) traverse the membrane as a helical segment.

Belongs to the CN hydrolase family. Apolipoprotein N-acyltransferase subfamily.

Its subcellular location is the cell inner membrane. It carries out the reaction N-terminal S-1,2-diacyl-sn-glyceryl-L-cysteinyl-[lipoprotein] + a glycerophospholipid = N-acyl-S-1,2-diacyl-sn-glyceryl-L-cysteinyl-[lipoprotein] + a 2-acyl-sn-glycero-3-phospholipid + H(+). It participates in protein modification; lipoprotein biosynthesis (N-acyl transfer). Its function is as follows. Catalyzes the phospholipid dependent N-acylation of the N-terminal cysteine of apolipoprotein, the last step in lipoprotein maturation. The chain is Apolipoprotein N-acyltransferase from Brucella suis biovar 1 (strain 1330).